Here is a 569-residue protein sequence, read N- to C-terminus: Methionine--tRNA ligase (569 aa).

The short motif at 11–21 (PYINGIKHLGN) is the 'HIGH' region element. Zn(2+) is bound by residues cysteine 143, cysteine 146, cysteine 156, and cysteine 159. Positions 342-346 (KFSTS) match the 'KMSKS' region motif. Threonine 345 is an ATP binding site.

The protein belongs to the class-I aminoacyl-tRNA synthetase family. MetG type 1 subfamily. In terms of assembly, monomer. Zn(2+) is required as a cofactor.

It is found in the cytoplasm. The enzyme catalyses tRNA(Met) + L-methionine + ATP = L-methionyl-tRNA(Met) + AMP + diphosphate. Functionally, is required not only for elongation of protein synthesis but also for the initiation of all mRNA translation through initiator tRNA(fMet) aminoacylation. This is Methionine--tRNA ligase from Caulobacter vibrioides (strain ATCC 19089 / CIP 103742 / CB 15) (Caulobacter crescentus).